A 441-amino-acid chain; its full sequence is Ribosomal protein uS12 methylthiotransferase RimO (441 aa).

The 111-residue stretch at Pro8 to Pro118 folds into the MTTase N-terminal domain. The [4Fe-4S] cluster site is built by Cys17, Cys53, Cys82, Cys150, Cys154, and Cys157. The Radical SAM core domain maps to Leu136–Glu373. The region spanning Gln376–Val441 is the TRAM domain.

This sequence belongs to the methylthiotransferase family. RimO subfamily. [4Fe-4S] cluster serves as cofactor.

It localises to the cytoplasm. It catalyses the reaction L-aspartate(89)-[ribosomal protein uS12]-hydrogen + (sulfur carrier)-SH + AH2 + 2 S-adenosyl-L-methionine = 3-methylsulfanyl-L-aspartate(89)-[ribosomal protein uS12]-hydrogen + (sulfur carrier)-H + 5'-deoxyadenosine + L-methionine + A + S-adenosyl-L-homocysteine + 2 H(+). Catalyzes the methylthiolation of an aspartic acid residue of ribosomal protein uS12. In Salmonella arizonae (strain ATCC BAA-731 / CDC346-86 / RSK2980), this protein is Ribosomal protein uS12 methylthiotransferase RimO.